Here is a 171-residue protein sequence, read N- to C-terminus: Small ribosomal subunit protein uS5 (171 aa).

Residues 16-79 (LREKMISVNR…EEARRKLVKI (64 aa)) form the S5 DRBM domain.

This sequence belongs to the universal ribosomal protein uS5 family. As to quaternary structure, part of the 30S ribosomal subunit. Contacts proteins S4 and S8.

With S4 and S12 plays an important role in translational accuracy. Its function is as follows. Located at the back of the 30S subunit body where it stabilizes the conformation of the head with respect to the body. This is Small ribosomal subunit protein uS5 from Thiobacillus denitrificans (strain ATCC 25259 / T1).